Reading from the N-terminus, the 796-residue chain is MAKGVNQIINNIRLRKLRKILNQINALSEEFSNFSDEALQAKTKEFKVYLNDNKASLNHILPQAYATVREASKRVLGMYPKDVQILGAIAMHQGNIAEMQTGEGKTLTATMPLYLNALTGKGAYLITTNDYLAKRDFLEMKPLYEWLGLSVSLGFVDIPEYEYAENEKYELYHHDIVYTTNGRLGFDYLIDNLADDIRAKFLPKLNFAIIDEVDSIILDAAQTPLVISGAPRVQSNLFHIVKKFVETLEKDKDFIVNFNKKEVWLTDEGSEKASHYFKVNSIYQQQYFDLVRMIHLSLRAKYLFKYNLDYFIFDGEIVLIDRITGRMLPGTKLQSGLHQAIEALENVEISQDMSVMATITFQNLFKQFDEFSGMTGTGKLGEKEFFDLYSKVVIEIPTHSPIERDDRPDRVFANGDKKNDAILKTVIGIHETQQPVLLITRTAEAAEYFSAELFKRDIPNNLLIAQNVAKEAQMIAEAGQLSAVTVATSMAGRGTDIKLSKEVHDIGGLAVIINEHMDNSRVDRQLRGRSGRQGDPGYSQIFVSLDDDLVKRWSNSNLAENKNLQTMDASKLESSALFKKRVKSIVNKAQRVSEETAMKNREMANEFEKSISVQRDKIYAERNHILEASDFDDFNFEQLARDVFTKDVKNLDLSSERALVNYIYENLSFVFDEDVSNINMQNDEEIIQFLIQQFTQQFNNRLEVAADSYLKLRFIQKSILKAIDSEWIEQVDNLQQLKASVNNRQNGQRNVIFEYHKVALETYEYMSEDIKRKMVRNLCLSILAFDKDGDMVIHFP.

ATP contacts are provided by residues Q84, G102–T106, and D496.

Belongs to the SecA family. As to quaternary structure, monomer and homodimer. Part of the essential Sec protein translocation apparatus which comprises SecA, SecYEG and auxiliary proteins SecDF. Other proteins may also be involved.

The protein resides in the cell membrane. Its subcellular location is the cytoplasm. The enzyme catalyses ATP + H2O + cellular proteinSide 1 = ADP + phosphate + cellular proteinSide 2.. Part of the Sec protein translocase complex. Interacts with the SecYEG preprotein conducting channel. Has a central role in coupling the hydrolysis of ATP to the transfer of proteins into and across the cell membrane, serving as an ATP-driven molecular motor driving the stepwise translocation of polypeptide chains across the membrane. In Staphylococcus epidermidis (strain ATCC 12228 / FDA PCI 1200), this protein is Protein translocase subunit SecA 2.